The sequence spans 286 residues: Ribosomal RNA small subunit methyltransferase H (286 aa).

S-adenosyl-L-methionine is bound by residues 30–32 (GGH), Asp49, Phe88, Asp97, and Gln104. The interval 260–286 (HPLQPSDEESFNNPASRSAKLRALEMR) is disordered.

The protein belongs to the methyltransferase superfamily. RsmH family.

The protein resides in the cytoplasm. The enzyme catalyses cytidine(1402) in 16S rRNA + S-adenosyl-L-methionine = N(4)-methylcytidine(1402) in 16S rRNA + S-adenosyl-L-homocysteine + H(+). Its function is as follows. Specifically methylates the N4 position of cytidine in position 1402 (C1402) of 16S rRNA. The polypeptide is Ribosomal RNA small subunit methyltransferase H (Solibacter usitatus (strain Ellin6076)).